We begin with the raw amino-acid sequence, 205 residues long: Ephrin-A1 (205 aa).

The N-terminal stretch at 1-18 is a signal peptide; that stretch reads MEFLWAPLLGLCCSLAAA. The 133-residue stretch at 19 to 151 folds into the Ephrin RBD domain; that stretch reads DRHTVFWNSS…KLKVTVSGKI (133 aa). N-linked (GlcNAc...) asparagine glycosylation is present at Asn-26. Disulfide bonds link Cys-51–Cys-92 and Cys-80–Cys-140. Ser-182 is lipidated: GPI-anchor amidated serine. A propeptide spans 183–205 (removed in mature form); it reads AAPRLSPLAWAVLLLPFLLLQTS.

This sequence belongs to the ephrin family. In terms of assembly, monomer. Homodimer. Forms heterodimers with EPHA2. Binds to the receptor tyrosine kinases EPHA2, EPHA3, EPHA4, EPHA5, EPHA6 and EPHA7. Also binds with low affinity to EPHA1. Undergoes proteolysis by a metalloprotease to give rise to a soluble monomeric form. Post-translationally, N-Glycosylation is required for binding to EPHA2 receptor and inducing its internalization.

It localises to the cell membrane. Its subcellular location is the secreted. In terms of biological role, cell surface GPI-bound ligand for Eph receptors, a family of receptor tyrosine kinases which are crucial for migration, repulsion and adhesion during neuronal, vascular and epithelial development. Binds promiscuously Eph receptors residing on adjacent cells, leading to contact-dependent bidirectional signaling into neighboring cells. Plays an important role in angiogenesis and tumor neovascularization. The recruitment of VAV2, VAV3 and PI3-kinase p85 subunit by phosphorylated EPHA2 is critical for EFNA1-induced RAC1 GTPase activation and vascular endothelial cell migration and assembly. Exerts anti-oncogenic effects in tumor cells through activation and down-regulation of EPHA2. Activates EPHA2 by inducing tyrosine phosphorylation which leads to its internalization and degradation. Acts as a negative regulator in the tumorigenesis of gliomas by down-regulating EPHA2 and FAK. Can evoke collapse of embryonic neuronal growth cone and regulates dendritic spine morphogenesis. The chain is Ephrin-A1 (EFNA1) from Sus scrofa (Pig).